The primary structure comprises 485 residues: NADH-quinone oxidoreductase subunit N (485 aa).

Helical transmembrane passes span 8-28, 35-55, 71-91, 105-125, 127-147, 159-179, 203-223, 235-255, 271-291, 297-317, 326-346, 373-393, 408-430, and 455-475; these read LIAL…MLSI, FLNA…LWFV, GFAM…CTFA, FYLL…ANHL, ALFL…GYAF, YTIL…LVYA, LLAG…LVPF, PAPV…GVVM, VVLG…ALSQ, LLGY…IALQ, VGVY…VVSL, AAVM…LGFI, WWLV…RVAV, and IVVL…QPLI.

The protein belongs to the complex I subunit 2 family. In terms of assembly, NDH-1 is composed of 13 different subunits. Subunits NuoA, H, J, K, L, M, N constitute the membrane sector of the complex.

The protein resides in the cell inner membrane. It carries out the reaction a quinone + NADH + 5 H(+)(in) = a quinol + NAD(+) + 4 H(+)(out). In terms of biological role, NDH-1 shuttles electrons from NADH, via FMN and iron-sulfur (Fe-S) centers, to quinones in the respiratory chain. The immediate electron acceptor for the enzyme in this species is believed to be ubiquinone. Couples the redox reaction to proton translocation (for every two electrons transferred, four hydrogen ions are translocated across the cytoplasmic membrane), and thus conserves the redox energy in a proton gradient. In Salmonella arizonae (strain ATCC BAA-731 / CDC346-86 / RSK2980), this protein is NADH-quinone oxidoreductase subunit N.